The primary structure comprises 307 residues: Homoserine O-acetyltransferase (307 aa).

Residue Cys-142 is the Acyl-thioester intermediate of the active site. Substrate is bound by residues Lys-163 and Ser-192. His-235 serves as the catalytic Proton acceptor. The active site involves Glu-237. Residue Arg-249 coordinates substrate.

Belongs to the MetA family.

The protein resides in the cytoplasm. The catalysed reaction is L-homoserine + acetyl-CoA = O-acetyl-L-homoserine + CoA. It participates in amino-acid biosynthesis; L-methionine biosynthesis via de novo pathway; O-acetyl-L-homoserine from L-homoserine: step 1/1. Functionally, transfers an acetyl group from acetyl-CoA to L-homoserine, forming acetyl-L-homoserine. In Rhizobium leguminosarum bv. trifolii (strain WSM2304), this protein is Homoserine O-acetyltransferase.